The chain runs to 388 residues: Chorismate synthase (388 aa).

NADP(+) is bound by residues R39 and R45. The tract at residues 95 to 118 (EKNEKSRRVSRPRPGHADLVGGMK) is disordered. FMN contacts are provided by residues 130-132 (RSS), 251-252 (NA), G296, 311-315 (KPIPT), and R337.

Belongs to the chorismate synthase family. In terms of assembly, homotetramer. It depends on FMNH2 as a cofactor.

The enzyme catalyses 5-O-(1-carboxyvinyl)-3-phosphoshikimate = chorismate + phosphate. The protein operates within metabolic intermediate biosynthesis; chorismate biosynthesis; chorismate from D-erythrose 4-phosphate and phosphoenolpyruvate: step 7/7. Functionally, catalyzes the anti-1,4-elimination of the C-3 phosphate and the C-6 proR hydrogen from 5-enolpyruvylshikimate-3-phosphate (EPSP) to yield chorismate, which is the branch point compound that serves as the starting substrate for the three terminal pathways of aromatic amino acid biosynthesis. This reaction introduces a second double bond into the aromatic ring system. This chain is Chorismate synthase, found in Listeria monocytogenes serotype 4b (strain CLIP80459).